The following is a 686-amino-acid chain: tRNA (guanine(37)-N(1))-methyltransferase (686 aa).

A disordered region spans residues 206-244 (GGPSSVSLTEDTDGSEQPQGLPRAAAAPPPPSNKRRASY). S-adenosyl-L-methionine contacts are provided by residues His-428, 466 to 467 (DL), 495 to 496 (DG), and Asn-530.

It belongs to the class I-like SAM-binding methyltransferase superfamily. TRM5/TYW2 family. As to quaternary structure, monomer.

The protein localises to the mitochondrion matrix. It is found in the nucleus. The protein resides in the cytoplasm. It carries out the reaction guanosine(37) in tRNA + S-adenosyl-L-methionine = N(1)-methylguanosine(37) in tRNA + S-adenosyl-L-homocysteine + H(+). Its function is as follows. Specifically methylates the N1 position of guanosine-37 in various cytoplasmic and mitochondrial tRNAs. Methylation is not dependent on the nature of the nucleoside 5' of the target nucleoside. This is the first step in the biosynthesis of wybutosine (yW), a modified base adjacent to the anticodon of tRNAs and required for accurate decoding. This chain is tRNA (guanine(37)-N(1))-methyltransferase, found in Leishmania major.